The following is a 264-amino-acid chain: Pimeloyl-[acyl-carrier protein] methyl ester esterase (264 aa).

An AB hydrolase-1 domain is found at 23-244 (LVMLHGWGVN…MLAKASHAPF (222 aa)). Substrate-binding positions include tryptophan 29, 87 to 88 (SL), and 150 to 154 (FLAIQ). Serine 87 acts as the Nucleophile in catalysis. Residues aspartate 214 and histidine 241 contribute to the active site. Substrate is bound at residue histidine 241.

Belongs to the AB hydrolase superfamily. Carboxylesterase BioH family. In terms of assembly, monomer.

It is found in the cytoplasm. It catalyses the reaction 6-carboxyhexanoyl-[ACP] methyl ester + H2O = 6-carboxyhexanoyl-[ACP] + methanol + H(+). It participates in cofactor biosynthesis; biotin biosynthesis. Functionally, the physiological role of BioH is to remove the methyl group introduced by BioC when the pimeloyl moiety is complete. It allows to synthesize pimeloyl-ACP via the fatty acid synthetic pathway through the hydrolysis of the ester bonds of pimeloyl-ACP esters. This is Pimeloyl-[acyl-carrier protein] methyl ester esterase from Shewanella sp. (strain MR-7).